Consider the following 68-residue polypeptide: Large ribosomal subunit protein bL33c (68 aa).

The protein belongs to the bacterial ribosomal protein bL33 family.

The protein resides in the plastid. It localises to the chloroplast. The polypeptide is Large ribosomal subunit protein bL33c (Pinus koraiensis (Korean pine)).